A 552-amino-acid polypeptide reads, in one-letter code: CTP synthase (552 aa).

The tract at residues 1-270 is amidoligase domain; sequence MTKYVFVTGG…DRIICEELKL (270 aa). Ser-13 lines the CTP pocket. Ser-13 contributes to the UTP binding site. ATP-binding positions include 14–19 and Asp-71; that span reads SLGKGI. The Mg(2+) site is built by Asp-71 and Glu-144. Residues 151–153, 191–196, and Lys-227 contribute to the CTP site; these read DIE and KTKPTQ. UTP is bound by residues 191–196 and Lys-227; that span reads KTKPTQ. The Glutamine amidotransferase type-1 domain occupies 295-547; sequence TIGMVGKYVD…VEAALANKQA (253 aa). Residue Gly-356 participates in L-glutamine binding. Catalysis depends on Cys-383, which acts as the Nucleophile; for glutamine hydrolysis. L-glutamine is bound by residues 384-387, Glu-407, and Arg-473; that span reads LGMQ. Catalysis depends on residues His-520 and Glu-522.

Belongs to the CTP synthase family. In terms of assembly, homotetramer.

The enzyme catalyses UTP + L-glutamine + ATP + H2O = CTP + L-glutamate + ADP + phosphate + 2 H(+). The catalysed reaction is L-glutamine + H2O = L-glutamate + NH4(+). It carries out the reaction UTP + NH4(+) + ATP = CTP + ADP + phosphate + 2 H(+). It functions in the pathway pyrimidine metabolism; CTP biosynthesis via de novo pathway; CTP from UDP: step 2/2. Its activity is regulated as follows. Allosterically activated by GTP, when glutamine is the substrate; GTP has no effect on the reaction when ammonia is the substrate. The allosteric effector GTP functions by stabilizing the protein conformation that binds the tetrahedral intermediate(s) formed during glutamine hydrolysis. Inhibited by the product CTP, via allosteric rather than competitive inhibition. Its function is as follows. Catalyzes the ATP-dependent amination of UTP to CTP with either L-glutamine or ammonia as the source of nitrogen. Regulates intracellular CTP levels through interactions with the four ribonucleotide triphosphates. The sequence is that of CTP synthase from Burkholderia cenocepacia (strain ATCC BAA-245 / DSM 16553 / LMG 16656 / NCTC 13227 / J2315 / CF5610) (Burkholderia cepacia (strain J2315)).